The chain runs to 616 residues: Carboxylic acid transporter protein homolog (616 aa).

Residues 1–11 (MSSSITDEKIS) show a composition bias toward basic and acidic residues. Residues 1–65 (MSSSITDEKI…LYHNPSLPAQ (65 aa)) form a disordered region. N-acetylserine is present on S2. Residues 2-140 (SSSITDEKIS…LRKMTWQNWN (139 aa)) are Cytoplasmic-facing. Phosphoserine is present on S4. A Glycyl lysine isopeptide (Lys-Gly) (interchain with G-Cter in ubiquitin) cross-link involves residue K9. Residues S11, S61, and S66 each carry the phosphoserine modification. T70 bears the Phosphothreonine mark. The helical transmembrane segment at 141-161 (YFFMGYFAWLSAAWAFFCVSV) threads the bilayer. Residues 162–176 (SVAPLAELYDRPTKD) are Extracellular-facing. The chain crosses the membrane as a helical span at residues 177-197 (ITWGLGLVLFVRSAGAVIFGL). Topologically, residues 198-205 (WTDKSSRK) are cytoplasmic. Residues 206–226 (WPYITCLFLFVIAQLCTPWCD) traverse the membrane as a helical segment. Over 227–230 (TYEK) the chain is Extracellular. Residues 231–251 (FLGVRWITGIAMGGIYGCASA) form a helical membrane-spanning segment. Topologically, residues 252-263 (TAIEDAPVKARS) are cytoplasmic. A helical transmembrane segment spans residues 264-284 (FLSGLFFSAYAMGFIFAIIFY). The Extracellular portion of the chain corresponds to 285 to 296 (RAFGYFRDDGWK). The chain crosses the membrane as a helical span at residues 297-317 (ILFWFSIFLPILLIFWRLLWP). The Cytoplasmic segment spans residues 318–363 (ETKYFTKVLKARKLILSDAVKANGGEPLPKANFKQKMVSMKRTVQK). Residue K338 forms a Glycyl lysine isopeptide (Lys-Gly) (interchain with G-Cter in ubiquitin) linkage. A helical membrane pass occupies residues 364–384 (YWLLFAYLVVLLVGPNYLTHA). Over 385 to 402 (SQDLLPTMLRAQLGLSKD) the chain is Extracellular. A helical transmembrane segment spans residues 403 to 423 (AVTVIVVVTNIGAICGGMIFG). Residues 424-432 (QFMEVTGRR) are Cytoplasmic-facing. Residues 433–453 (LGLLIACTMGGCFTYPAFMLR) form a helical membrane-spanning segment. The Extracellular segment spans residues 454 to 457 (SEKA). A helical transmembrane segment spans residues 458 to 478 (ILGAGFMLYFCVFGVWGILPI). The Cytoplasmic segment spans residues 479–489 (HLAELAPADAR). Residues 490–510 (ALVAGLSYQLGNLASAAASTI) form a helical membrane-spanning segment. The Extracellular segment spans residues 511-535 (ETQLADRYPLERDASGAVIKEDYAK). The helical transmembrane segment at 536-556 (VMAILTGSVFIFTFACVFVGH) threads the bilayer. Topologically, residues 557–616 (EKFHRDLSSPVMKKYINQVEEYEADGLSISDIVEQKTECASVKMIDSNVSKTYEEHIETV) are cytoplasmic. Phosphoserine is present on residues S584, S603, and S606.

This sequence belongs to the major facilitator superfamily. Sugar transporter (TC 2.A.1.1) family.

The protein localises to the membrane. Functionally, essential to lactate transport. The chain is Carboxylic acid transporter protein homolog (JEN1) from Saccharomyces cerevisiae (strain ATCC 204508 / S288c) (Baker's yeast).